The following is a 381-amino-acid chain: Cytochrome b (381 aa).

4 helical membrane-spanning segments follow: residues 34–54, 78–99, 114–134, and 179–199; these read FGSLLGLCLIMQIITGLFLAM, WLMRNIHAYGASFFFICIYLHI, WNIGVVLLFLLMATAFVGYVL, and FFAFHFLLPFLILALSVIHIL. Heme b contacts are provided by His-84 and His-98. Residues His-183 and His-197 each contribute to the heme b site. His-202 contacts a ubiquinone. The next 4 helical transmembrane spans lie at 227-247, 289-309, 321-341, and 348-368; these read YKDLFGFLIVITLLATLALFM, LGGVLALLFSIFILLLVPLLH, LTQIFFWSLVTNAIILTWIGG, and FIMVGQIASVAYFSLFLFVIP.

It belongs to the cytochrome b family. In terms of assembly, the cytochrome bc1 complex contains 3 respiratory subunits (MT-CYB, CYC1 and UQCRFS1), 2 core proteins (UQCRC1 and UQCRC2) and probably 6 low-molecular weight proteins. Heme b serves as cofactor.

Its subcellular location is the mitochondrion inner membrane. In terms of biological role, component of the ubiquinol-cytochrome c reductase complex (complex III or cytochrome b-c1 complex) that is part of the mitochondrial respiratory chain. The b-c1 complex mediates electron transfer from ubiquinol to cytochrome c. Contributes to the generation of a proton gradient across the mitochondrial membrane that is then used for ATP synthesis. The protein is Cytochrome b (mt-cyb) of Scyliorhinus canicula (Small-spotted catshark).